The sequence spans 380 residues: ATPase ASNA1 homolog (380 aa).

Residue 48–55 (KGGVGKTT) coordinates ATP. Asp77 is a catalytic residue. Residues Glu248 and Asn275 each contribute to the ATP site.

This sequence belongs to the arsA ATPase family. As to quaternary structure, homodimer.

The protein resides in the cytoplasm. Its subcellular location is the endoplasmic reticulum. Its function is as follows. ATPase required for the post-translational delivery of tail-anchored (TA) proteins to the endoplasmic reticulum. Recognizes and selectively binds the transmembrane domain of TA proteins in the cytosol. This complex then targets to the endoplasmic reticulum by membrane-bound receptors, where the tail-anchored protein is released for insertion. This process is regulated by ATP binding and hydrolysis. ATP binding drives the homodimer towards the closed dimer state, facilitating recognition of newly synthesized TA membrane proteins. ATP hydrolysis is required for insertion. Subsequently, the homodimer reverts towards the open dimer state, lowering its affinity for the membrane-bound receptor, and returning it to the cytosol to initiate a new round of targeting. This Plasmodium chabaudi chabaudi protein is ATPase ASNA1 homolog.